A 2486-amino-acid polypeptide reads, in one-letter code: Nonribosomal peptide synthetase nanA (2486 aa).

The interval 231–637 (FSARQPLSPA…GRRGTQVKLR (407 aa)) is adenylation 1. One can recognise a Carrier 1 domain in the interval 786 to 860 (TDIELKVHAL…DLARSAKETS (75 aa)). An O-(pantetheine 4'-phosphoryl)serine modification is found at serine 820. A condensation 1 region spans residues 902–1314 (EDAYPCTPLQ…LKSVPRVSSQ (413 aa)). The tract at residues 1339–1735 (RAQARKTPLA…GRIGDQMKIR (397 aa)) is adenylation 2. 2 consecutive Carrier domains span residues 1872–1948 (PPST…SSAS) and 2404–2480 (SSSE…QTQA). 2 positions are modified to O-(pantetheine 4'-phosphoryl)serine: serine 1909 and serine 2441. The interval 2404–2480 (SSSETIVEPL…KLARLLQTQA (77 aa)) is condensation 2.

It belongs to the NRP synthetase family.

Its pathway is secondary metabolite biosynthesis. Functionally, nonribosomal peptide synthetase; part of the gene cluster that mediates the biosynthesis of the benzazepine alkaloid nanangelenin A which contains an unprecedented 3,4-dihydro-1-benzazepine-2,5-dione-N-prenyl-N-acetoxy-anthranilamide scaffold. The first step of nanangelenin biosynthesis is catalyzed by the indoleamine 2,3-dioxygenase nanC which produces N-formyl-kynurenine through the catabolism of tryptophan. The two-module NRPS nanA then utilizes anthranilate (Ant) and L-kynurenine (L-Kyn) to assemble the dipeptide product nanangelenin B. The first adenylation domain of nanA (A1) loads anthranilate onto the T1 domain, while A2 loads kynurenine, generated through spontaneous nonenzymatic deformylation of the nanC-supplied N-formyl-kynurenine. The peptide bond formation between the tethered amino acids is catalyzed by the first condensation domain (C1) between anthranilate's carbonyl carbon and kynurenine's aliphatic primary amine. The second C domain (C2) catalyzes the final cyclization event between the aromatic amine of kynurenine and the tethered carbonyl carbon, yielding nanangelenin B. The terminal T3 domain enhances the catalytic efficiency of C2, suggesting the T2-tethered Ant-L-Kyn is transferred to T3 prior to cyclization by C2. Once released from nanA, nanangelenin B is then prenylated by the prenyltransferase nanD to form nanangelenin C. Nanangelenin C is then N-hydroxylated by the FAD-dependent monooxygenase nanF and further acetylated by the acetyltransferase nanB to yield nanangelenin F. Finally, the N-methyltransferase nanE methylates the amide nitrogen of 1-benzazepine to convert nanangelenin F into nanangelenin A. NanE is also able to methylate most of the intermediates of the pathway such as nanangelenin B and nanangelenin C to produce nanangelenin D and nanangelenin E, respectively. This Aspergillus nanangensis protein is Nonribosomal peptide synthetase nanA.